The following is a 295-amino-acid chain: Acetylglutamate kinase (295 aa).

Residues 64–65 (GG), R86, and N190 each bind substrate.

This sequence belongs to the acetylglutamate kinase family. ArgB subfamily.

It is found in the cytoplasm. It catalyses the reaction N-acetyl-L-glutamate + ATP = N-acetyl-L-glutamyl 5-phosphate + ADP. It functions in the pathway amino-acid biosynthesis; L-arginine biosynthesis; N(2)-acetyl-L-ornithine from L-glutamate: step 2/4. Its function is as follows. Catalyzes the ATP-dependent phosphorylation of N-acetyl-L-glutamate. The sequence is that of Acetylglutamate kinase from Pelotomaculum thermopropionicum (strain DSM 13744 / JCM 10971 / SI).